Consider the following 248-residue polypeptide: Protein maestro (248 aa).

Positions 1–21 (MDQRQRRILGQPLSIPTSQPK) are disordered. The stretch at 128–163 (SFFIDITLQTRTLLDDENDSLRYSAFVLFGQLAAFA) is one HEAT repeat.

In terms of tissue distribution, ubiquitous.

The protein localises to the nucleus. It is found in the nucleolus. The sequence is that of Protein maestro (MRO) from Homo sapiens (Human).